Consider the following 366-residue polypeptide: tRNA/tmRNA (uracil-C(5))-methyltransferase (366 aa).

S-adenosyl-L-methionine contacts are provided by Gln190, Tyr218, Asn223, Glu239, and Asp299. The active-site Nucleophile is Cys324. Residue Glu358 is the Proton acceptor of the active site.

This sequence belongs to the class I-like SAM-binding methyltransferase superfamily. RNA M5U methyltransferase family. TrmA subfamily.

It catalyses the reaction uridine(54) in tRNA + S-adenosyl-L-methionine = 5-methyluridine(54) in tRNA + S-adenosyl-L-homocysteine + H(+). It carries out the reaction uridine(341) in tmRNA + S-adenosyl-L-methionine = 5-methyluridine(341) in tmRNA + S-adenosyl-L-homocysteine + H(+). Dual-specificity methyltransferase that catalyzes the formation of 5-methyluridine at position 54 (m5U54) in all tRNAs, and that of position 341 (m5U341) in tmRNA (transfer-mRNA). The polypeptide is tRNA/tmRNA (uracil-C(5))-methyltransferase (Escherichia coli O157:H7).